The following is a 257-amino-acid chain: Imidazole glycerol phosphate synthase subunit HisF (257 aa).

Active-site residues include Asp11 and Asp130.

This sequence belongs to the HisA/HisF family. Heterodimer of HisH and HisF.

It localises to the cytoplasm. The enzyme catalyses 5-[(5-phospho-1-deoxy-D-ribulos-1-ylimino)methylamino]-1-(5-phospho-beta-D-ribosyl)imidazole-4-carboxamide + L-glutamine = D-erythro-1-(imidazol-4-yl)glycerol 3-phosphate + 5-amino-1-(5-phospho-beta-D-ribosyl)imidazole-4-carboxamide + L-glutamate + H(+). It participates in amino-acid biosynthesis; L-histidine biosynthesis; L-histidine from 5-phospho-alpha-D-ribose 1-diphosphate: step 5/9. Its function is as follows. IGPS catalyzes the conversion of PRFAR and glutamine to IGP, AICAR and glutamate. The HisF subunit catalyzes the cyclization activity that produces IGP and AICAR from PRFAR using the ammonia provided by the HisH subunit. The sequence is that of Imidazole glycerol phosphate synthase subunit HisF from Shewanella baltica (strain OS155 / ATCC BAA-1091).